The chain runs to 363 residues: 1,2-Dihydrovomilenine reductase (363 aa).

The 329-residue stretch at 24–352 (GILSPFKFSR…KGDVRYRFVI (329 aa)) folds into the Enoyl reductase (ER) domain. C51 lines the Zn(2+) pocket. S53 serves as a coordination point for NADP(+). The Zn(2+) site is built by D54, E74, C104, C107, C110, and C118. Positions 193, 195, 196, 215, 216, 217, 220, 221, 278, 280, 302, and 349 each coordinate NADP(+).

Belongs to the zinc-containing alcohol dehydrogenase family. Class-P subfamily. As to quaternary structure, homodimer. Zn(2+) is required as a cofactor. In terms of tissue distribution, mainly expressed in mature roots and, to a lower extent, in stems and leaves.

Its subcellular location is the cytoplasm. It catalyses the reaction 17-O-acetylnorajmaline + NADP(+) = (2R)-1,2-dihydrovomilenine + NADPH + 2 H(+). The enzyme catalyses (20S)-19,20-dihydrovomilenine + NADP(+) = vomilenine + NADPH + H(+). It functions in the pathway alkaloid biosynthesis; ajmaline biosynthesis. Its function is as follows. Alcohol dehydrogenase involved in the biosynthesis of ajmaline-type monoterpenoid indole alkaloids (MIAs) natural products, important plant-derived pharmaceuticals used in the therapy of heart disorders. Catalyzes the conversion of 1,2-dihydrovomilenine to 17-O-acetylnorajmaline, an intermediate chemical in the biosynthesis of ajmaline. Also able, with a lower efficiency, to convert vomilenine into 19,20-dihydrovomilenine. This is 1,2-Dihydrovomilenine reductase from Rauvolfia serpentina (Serpentine wood).